A 595-amino-acid polypeptide reads, in one-letter code: Protein LUTEIN DEFICIENT 5, chloroplastic (595 aa).

A chloroplast-targeting transit peptide spans 1–28 (MAMAFPLSYTPTITVKPVTYSRRSNFVV). A heme-binding site is contributed by Cys-516.

This sequence belongs to the cytochrome P450 family. The cofactor is heme.

It is found in the plastid. The protein localises to the chloroplast. Its function is as follows. Heme-containing cytochrome P450 involved in the biosynthesis of xanthophylls. Specific for beta-ring hydroxylation of alpha- and beta-carotene. Also has a low activity toward the epsilon-rings of alpha-carotene. The beta-ring of alpha-carotene is the preferred substrate in planta. The protein is Protein LUTEIN DEFICIENT 5, chloroplastic (CYP97A3) of Arabidopsis thaliana (Mouse-ear cress).